A 658-amino-acid polypeptide reads, in one-letter code: UvrABC system protein B (658 aa).

Residues 26-414 (AGLKKGLKHQ…PDVIEQIIRP (389 aa)) enclose the Helicase ATP-binding domain. Position 39–46 (39–46 (GATGTGKT)) interacts with ATP. The short motif at 92-115 (YYDYYQPEAYVPQSDTYIEKDASI) is the Beta-hairpin element. A Helicase C-terminal domain is found at 430-592 (QIDDLMDEIN…ITPKTIKKEI (163 aa)). Residues 622–658 (DVFIEGMEHEMKEAAKALDFERAAELRDALLEIKAEG) enclose the UVR domain.

The protein belongs to the UvrB family. In terms of assembly, forms a heterotetramer with UvrA during the search for lesions. Interacts with UvrC in an incision complex.

The protein resides in the cytoplasm. The UvrABC repair system catalyzes the recognition and processing of DNA lesions. A damage recognition complex composed of 2 UvrA and 2 UvrB subunits scans DNA for abnormalities. Upon binding of the UvrA(2)B(2) complex to a putative damaged site, the DNA wraps around one UvrB monomer. DNA wrap is dependent on ATP binding by UvrB and probably causes local melting of the DNA helix, facilitating insertion of UvrB beta-hairpin between the DNA strands. Then UvrB probes one DNA strand for the presence of a lesion. If a lesion is found the UvrA subunits dissociate and the UvrB-DNA preincision complex is formed. This complex is subsequently bound by UvrC and the second UvrB is released. If no lesion is found, the DNA wraps around the other UvrB subunit that will check the other stand for damage. This is UvrABC system protein B from Listeria monocytogenes serovar 1/2a (strain ATCC BAA-679 / EGD-e).